A 349-amino-acid chain; its full sequence is UDP-3-O-acylglucosamine N-acyltransferase (349 aa).

The active-site Proton acceptor is His242.

Belongs to the transferase hexapeptide repeat family. LpxD subfamily. Homotrimer.

The catalysed reaction is a UDP-3-O-[(3R)-3-hydroxyacyl]-alpha-D-glucosamine + a (3R)-hydroxyacyl-[ACP] = a UDP-2-N,3-O-bis[(3R)-3-hydroxyacyl]-alpha-D-glucosamine + holo-[ACP] + H(+). It functions in the pathway bacterial outer membrane biogenesis; LPS lipid A biosynthesis. Its function is as follows. Catalyzes the N-acylation of UDP-3-O-acylglucosamine using 3-hydroxyacyl-ACP as the acyl donor. Is involved in the biosynthesis of lipid A, a phosphorylated glycolipid that anchors the lipopolysaccharide to the outer membrane of the cell. The sequence is that of UDP-3-O-acylglucosamine N-acyltransferase from Cytophaga hutchinsonii (strain ATCC 33406 / DSM 1761 / CIP 103989 / NBRC 15051 / NCIMB 9469 / D465).